The chain runs to 1040 residues: Isoleucine--tRNA ligase (1040 aa).

The short motif at 47–57 (PYCSGSIHLGT) is the 'HIGH' region element. The 'KMSKS' region motif lies at 605–609 (KMSKS). Lys-608 provides a ligand contact to ATP.

It belongs to the class-I aminoacyl-tRNA synthetase family. IleS type 2 subfamily. As to quaternary structure, monomer. Requires Zn(2+) as cofactor.

Its subcellular location is the cytoplasm. It carries out the reaction tRNA(Ile) + L-isoleucine + ATP = L-isoleucyl-tRNA(Ile) + AMP + diphosphate. Functionally, catalyzes the attachment of isoleucine to tRNA(Ile). As IleRS can inadvertently accommodate and process structurally similar amino acids such as valine, to avoid such errors it has two additional distinct tRNA(Ile)-dependent editing activities. One activity is designated as 'pretransfer' editing and involves the hydrolysis of activated Val-AMP. The other activity is designated 'posttransfer' editing and involves deacylation of mischarged Val-tRNA(Ile). This Methanococcus aeolicus (strain ATCC BAA-1280 / DSM 17508 / OCM 812 / Nankai-3) protein is Isoleucine--tRNA ligase.